The following is a 782-amino-acid chain: DnaJ homolog subfamily C member 16 (782 aa).

The first 25 residues, 1–25 (MEVRKLSISWQFLIVLVLILQILSA), serve as a signal peptide directing secretion. Residues 26–535 (LDFDPYRVLG…DSIFHNNWRE (510 aa)) are Cytoplasmic-facing. A J domain is found at 29-93 (DPYRVLGVSR…EKRSNYDQYG (65 aa)). In terms of domain architecture, Thioredoxin spans 119 to 247 (FYFDESFFHF…LRQFVESLLP (129 aa)). The helical; Anchor for type IV membrane protein transmembrane segment at 536-556 (MMPLLSLIFSALFILFGTVIV) threads the bilayer. Residues 557 to 782 (QAFSDSNDER…FYIPSWPELD (226 aa)) lie on the Extracellular side of the membrane. Residues 562–593 (SNDERESSPPEKEEAQEKTGKTEPSFTKENSS) are disordered. Residues 563–582 (NDERESSPPEKEEAQEKTGK) show a composition bias toward basic and acidic residues. A compositionally biased stretch (polar residues) spans 583-593 (TEPSFTKENSS). An N-linked (GlcNAc...) asparagine glycan is attached at N631.

The protein localises to the endoplasmic reticulum membrane. Functionally, plays an important role in regulating the size of autophagosomes during the formation process. The chain is DnaJ homolog subfamily C member 16 (DNAJC16) from Homo sapiens (Human).